Consider the following 279-residue polypeptide: uncharacterized protein (279 aa).

A signal peptide spans 1 to 19 (MKLKLYLIPLLASGIILSA). Cysteine 20 carries N-palmitoyl cysteine lipidation. Cysteine 20 carries the S-diacylglycerol cysteine lipid modification.

The protein belongs to the MG439/MG440 family.

The protein resides in the cell membrane. This is an uncharacterized protein from Mycoplasma pneumoniae (strain ATCC 29342 / M129 / Subtype 1) (Mycoplasmoides pneumoniae).